The following is a 377-amino-acid chain: uncharacterized protein (377 aa).

32–39 (GPINSGKT) contacts ATP.

Belongs to the archaeal ATPase family.

This is an uncharacterized protein from Methanocaldococcus jannaschii (strain ATCC 43067 / DSM 2661 / JAL-1 / JCM 10045 / NBRC 100440) (Methanococcus jannaschii).